The following is an 85-amino-acid chain: MNISKQEQRVLHTLAMGGEIRRYLNEDGKLTEITCFTREGYGLSNCTMDTFKKLKNKKLISSKGGRPYRITPLGATSAQAQMNQR.

Belongs to the UPF0386 family.

This chain is UPF0386 protein VF_0869, found in Aliivibrio fischeri (strain ATCC 700601 / ES114) (Vibrio fischeri).